A 162-amino-acid chain; its full sequence is CASP-like protein 1C2 (162 aa).

The Cytoplasmic portion of the chain corresponds to 1 to 6 (MMKPKR). The helical transmembrane segment at 7–27 (LLSLLLRLIAVGATLAAVIIM) threads the bilayer. The Extracellular segment spans residues 28 to 49 (ATSHEKGTFFAVSYEAKYTDTP). The chain crosses the membrane as a helical span at residues 50–70 (AFKYFVIANAIVTVYGFLVLF). Topologically, residues 71-79 (HPPGSPLWR) are cytoplasmic. A helical membrane pass occupies residues 80 to 100 (LVLALDLVFTMLLISSISAAL). Residues 101-130 (AVAQVGKNGNSRAGWLPVCGQVTKYCNQVT) lie on the Extracellular side of the membrane. Residues 131–151 (GALVAGLIALITYIILLLHSI) traverse the membrane as a helical segment. The Cytoplasmic segment spans residues 152–162 (YTFLNPLLEKA).

It belongs to the Casparian strip membrane proteins (CASP) family. As to quaternary structure, homodimer and heterodimers.

It localises to the cell membrane. The sequence is that of CASP-like protein 1C2 from Populus trichocarpa (Western balsam poplar).